The following is a 475-amino-acid chain: Kynureninase (475 aa).

Pyridoxal 5'-phosphate-binding positions include leucine 141, threonine 142, 169–172 (FPSD), aspartate 254, histidine 257, and tyrosine 279. Position 280 is an N6-(pyridoxal phosphate)lysine (lysine 280). Residues tryptophan 319 and asparagine 347 each coordinate pyridoxal 5'-phosphate.

It belongs to the kynureninase family. Homodimer. Pyridoxal 5'-phosphate serves as cofactor.

The protein resides in the cytoplasm. The catalysed reaction is L-kynurenine + H2O = anthranilate + L-alanine + H(+). It catalyses the reaction 3-hydroxy-L-kynurenine + H2O = 3-hydroxyanthranilate + L-alanine + H(+). The protein operates within amino-acid degradation; L-kynurenine degradation; L-alanine and anthranilate from L-kynurenine: step 1/1. Its pathway is cofactor biosynthesis; NAD(+) biosynthesis; quinolinate from L-kynurenine: step 2/3. In terms of biological role, catalyzes the cleavage of L-kynurenine (L-Kyn) and L-3-hydroxykynurenine (L-3OHKyn) into anthranilic acid (AA) and 3-hydroxyanthranilic acid (3-OHAA), respectively. The protein is Kynureninase (bna5) of Sclerotinia sclerotiorum (strain ATCC 18683 / 1980 / Ss-1) (White mold).